The primary structure comprises 622 residues: MSTDNKQSLPAITLAAIGVVYGDIGTSPLYTLRECLSGQFGFGVERDAVFGFLSLIFWLLIFVVSIKYLTFVMRADNAGEGGILTLMSLAGRNTSARTTSMLVIMGLIGGSFFYGEVVITPAISVMSAIEGLEIVAPQLDTWIVPLSIIVLTLLFMIQKHGTAMVGKLFAPIMLTWFLILAGLGLRSIIANQEVLYALNPMWAVHFFLEYKTVSFIALGAVVLSITGVEALYADMGHFGKFPIRLAWFTVVLPSLTLNYFGQGALLLKNPEAIKNPFFLLAPDWALIPLLIIAALATVIASQAVISGVFSLTRQAVRLGYLSPMRIIHTSEMESGQIYIPFVNWMLYVAVVIVIVSFEHSSNLAAAYGIAVTGTMVLTSILSTTVARQNWHWNKYFVALILIAFLCVDIPLFTANLDKLLSGGWLPLSLGTVMFIVMTTWKSERFRLLRRMHEHGNSLEAMIASLEKSPPVRVPGTAVYMSRAINVIPFALMHNLKHNKVLHERVILLTLRTEDAPYVHNVRRVQIEQLSPTFWRVVASYGWRETPNVEEVFHRCGLEGLSCRMMETSFFMSHESLILGKRPWYLRLRGKLYLLLQRNALRAPDQFEIPPNRVIELGTQVEI.

The next 12 membrane-spanning stretches (helical) occupy residues 9–29, 49–69, 103–123, 137–157, 165–185, 213–233, 247–267, 276–296, 337–357, 363–383, 396–416, and 419–439; these read LPAI…TSPL, VFGF…IKYL, VIMG…TPAI, PQLD…LFMI, VGKL…GLGL, VSFI…ALYA, WFTV…ALLL, PFFL…AALA, IYIP…IVSF, LAAA…ILST, FVAL…TANL, and LLSG…VMTT.

This sequence belongs to the HAK/KUP transporter (TC 2.A.72) family.

The protein resides in the cell inner membrane. It carries out the reaction K(+)(in) + H(+)(in) = K(+)(out) + H(+)(out). Responsible for the low-affinity transport of potassium into the cell. Likely operates as a K(+):H(+) symporter. The polypeptide is Low affinity potassium transport system protein Kup (Escherichia coli O157:H7).